Reading from the N-terminus, the 471-residue chain is Amidophosphoribosyltransferase (471 aa).

Cys-2 functions as the Nucleophile in the catalytic mechanism. One can recognise a Glutamine amidotransferase type-2 domain in the interval 2–224 (CGIFGIYSYE…PGEIIEIKDG (223 aa)). Cys-255 contributes to the [4Fe-4S] cluster binding site. 3 residues coordinate Mg(2+): Ser-302, Asp-364, and Asp-365. [4Fe-4S] cluster-binding residues include Cys-401, Cys-450, and Cys-453.

The protein in the C-terminal section; belongs to the purine/pyrimidine phosphoribosyltransferase family. The cofactor is Mg(2+). It depends on [4Fe-4S] cluster as a cofactor.

It catalyses the reaction 5-phospho-beta-D-ribosylamine + L-glutamate + diphosphate = 5-phospho-alpha-D-ribose 1-diphosphate + L-glutamine + H2O. The protein operates within purine metabolism; IMP biosynthesis via de novo pathway; N(1)-(5-phospho-D-ribosyl)glycinamide from 5-phospho-alpha-D-ribose 1-diphosphate: step 1/2. Catalyzes the formation of phosphoribosylamine from phosphoribosylpyrophosphate (PRPP) and glutamine. This chain is Amidophosphoribosyltransferase, found in Methanocaldococcus jannaschii (strain ATCC 43067 / DSM 2661 / JAL-1 / JCM 10045 / NBRC 100440) (Methanococcus jannaschii).